An 89-amino-acid polypeptide reads, in one-letter code: Small ribosomal subunit protein uS15 (89 aa).

Belongs to the universal ribosomal protein uS15 family. In terms of assembly, part of the 30S ribosomal subunit. Forms a bridge to the 50S subunit in the 70S ribosome, contacting the 23S rRNA.

Functionally, one of the primary rRNA binding proteins, it binds directly to 16S rRNA where it helps nucleate assembly of the platform of the 30S subunit by binding and bridging several RNA helices of the 16S rRNA. In terms of biological role, forms an intersubunit bridge (bridge B4) with the 23S rRNA of the 50S subunit in the ribosome. The chain is Small ribosomal subunit protein uS15 from Chlamydia muridarum (strain MoPn / Nigg).